Consider the following 137-residue polypeptide: MLQPKRTKYRKQFKGRIKGVAKGGSDLAFGEFGLKAQEPNRVNAREIEAARRAITRYMKRAGRVWIRVFPDVPVTAKPTEVRMGKGKGSVEYWACKVKPGRMMFEIDGVSEEIAREALRLGSAKLSVKTRFVQRIAE.

This sequence belongs to the universal ribosomal protein uL16 family. Part of the 50S ribosomal subunit.

Its function is as follows. Binds 23S rRNA and is also seen to make contacts with the A and possibly P site tRNAs. This chain is Large ribosomal subunit protein uL16, found in Rhizobium etli (strain CIAT 652).